The primary structure comprises 132 residues: Large ribosomal subunit protein uL14 (132 aa).

It belongs to the universal ribosomal protein uL14 family. In terms of assembly, part of the 50S ribosomal subunit. Forms a cluster with proteins L3 and L24e, part of which may contact the 16S rRNA in 2 intersubunit bridges.

Its function is as follows. Binds to 23S rRNA. Forms part of two intersubunit bridges in the 70S ribosome. This Thermoplasma acidophilum (strain ATCC 25905 / DSM 1728 / JCM 9062 / NBRC 15155 / AMRC-C165) protein is Large ribosomal subunit protein uL14.